The chain runs to 564 residues: Bifunctional protein CrtB/UppS (564 aa).

Residue Asp329 is part of the active site. Asp329 lines the Mg(2+) pocket. Residues 330 to 333 (GNRR), Trp334, His346, and 374 to 376 (STE) each bind substrate. Asn377 functions as the Proton acceptor in the catalytic mechanism. Substrate contacts are provided by residues Trp378, Arg380, Arg497, and 502–504 (RIS). Glu515 is a Mg(2+) binding site.

In the N-terminal section; belongs to the phytoene/squalene synthase family. This sequence in the C-terminal section; belongs to the UPP synthase family. Homodimer. Requires Mg(2+) as cofactor.

The enzyme catalyses 2 (2E,6E,10E)-geranylgeranyl diphosphate = 15-cis-phytoene + 2 diphosphate. It functions in the pathway carotenoid biosynthesis; phytoene biosynthesis; all-trans-phytoene from geranylgeranyl diphosphate: step 1/1. Catalyzes the reaction from prephytoene diphosphate to phytoene. In terms of biological role, catalyzes the condensation of isopentenyl diphosphate (IPP) with allylic pyrophosphates generating different type of terpenoids. This is Bifunctional protein CrtB/UppS (crtB/uppS3) from Streptomyces coelicolor (strain ATCC BAA-471 / A3(2) / M145).